A 139-amino-acid chain; its full sequence is Thioredoxin H-type (139 aa).

The 113-residue stretch at 20 to 132 (ELAGGNVHLI…LHKKITAILD (113 aa)) folds into the Thioredoxin domain. Residues Cys-58 and Cys-61 each act as nucleophile in the active site. A disulfide bridge links Cys-58 with Cys-61.

It localises to the cytoplasm. Participates in various redox reactions through the reversible oxidation of the active center dithiol to a disulfide. The H form is known to activate a number of cytosolic enzymes. In Populus jackii (Balm of Gilead), this protein is Thioredoxin H-type.